The primary structure comprises 228 residues: LOB domain-containing protein 30 (228 aa).

In terms of domain architecture, LOB spans 16–118 (GPCGACKFLR…TELSYLQAHL (103 aa)). The segment at 188 to 228 (SNMGGGGELQALAREFIHGGQMPAQPSPGTSGSASSVIKRE) is disordered. Polar residues predominate over residues 214–228 (SPGTSGSASSVIKRE).

It belongs to the LOB domain-containing protein family. In terms of tissue distribution, expressed in roots, stems, leaves and flowers. Expressed in vascular tissues of hypocotyls, leaves, roots, developing floral organs and siliques.

Functionally, involved in the positive regulation of tracheary element (TE) differentiation. Involved in a positive feedback loop that maintains or promotes NAC030/VND7 expression that regulates TE differentiation-related genes. In Arabidopsis thaliana (Mouse-ear cress), this protein is LOB domain-containing protein 30 (LBD30).